The sequence spans 177 residues: uncharacterized protein (177 aa).

Residues Gln100–His115 show a composition bias toward low complexity. The interval Gln100–Lys135 is disordered. A helical membrane pass occupies residues Trp141–Tyr158.

The protein resides in the membrane. This is an uncharacterized protein from Aedes vexans (Inland floodwater mosquito).